Reading from the N-terminus, the 324-residue chain is Olfactory receptor 52I1 (324 aa).

Residues 1–29 (MLGPAYNHTMETPASFLLVGIPGLQSSHL) are Extracellular-facing. Residue asparagine 7 is glycosylated (N-linked (GlcNAc...) asparagine). The helical transmembrane segment at 30 to 50 (WLAISLSAMYITALLGNTLIV) threads the bilayer. Topologically, residues 51–58 (TAIWMDST) are cytoplasmic. The helical transmembrane segment at 59–79 (RHEPMYCFLCVLAAVDIVMAS) threads the bilayer. The Extracellular segment spans residues 80–103 (SVVPKMVSIFCSGDSSISFSACFT). Cysteine 101 and cysteine 193 form a disulfide bridge. Residues 104-124 (QMFFVHLATAVETGLLLTMAF) traverse the membrane as a helical segment. Topologically, residues 125–143 (DRYVAICKPLHYKRILTPQ) are cytoplasmic. A helical transmembrane segment spans residues 144–164 (VMLGMSMAVTIRAVTFMTPLS). The Extracellular segment spans residues 165–200 (WMMNHLPFCGSNVVVHSYCKHIALARLACADPVPSS). A helical transmembrane segment spans residues 201–221 (LYSLIGSSLMVGSDVAFIAAS). Topologically, residues 222–241 (YILILRAVFDLSSKTAQLKA) are cytoplasmic. Residues 242 to 262 (LSTCGSHVGVMALYYLPGMAS) form a helical membrane-spanning segment. Topologically, residues 263–278 (IYAAWLGQDIVPLHTQ) are extracellular. A helical transmembrane segment spans residues 279 to 299 (VLLADLYVIIPATLNPIIYGM). Over 300-324 (RTKQLLEGIWSYLMHFLFDHSNLGS) the chain is Cytoplasmic.

The protein belongs to the G-protein coupled receptor 1 family.

Its subcellular location is the cell membrane. In terms of biological role, odorant receptor. The polypeptide is Olfactory receptor 52I1 (OR52I1) (Homo sapiens (Human)).